The primary structure comprises 417 residues: Actin-related protein 10 (417 aa).

The protein belongs to the actin family. As to quaternary structure, subunit of dynactin, a multiprotein complex part of a tripartite complex with dynein and a adapter, such as BICDL1, BICD2 or HOOK3. The dynactin complex is built around ACTR1A/ACTB filament and consists of an actin-related filament composed of a shoulder domain, a pointed end and a barbed end. Its length is defined by its flexible shoulder domain. The soulder is composed of 2 DCTN1 subunits, 4 DCTN2 and 2 DCTN3. The 4 DCNT2 (via N-terminus) bind the ACTR1A filament and act as molecular rulers to determine the length. The pointed end is important for binding dynein-dynactin cargo adapters. Consists of 4 subunits: ACTR10, DCNT4, DCTN5 and DCTN6. The barbed end is composed of a CAPZA1:CAPZB heterodimers, which binds ACTR1A/ACTB filament and dynactin and stabilizes dynactin.

Its subcellular location is the cytoplasm. It is found in the cytoskeleton. Its function is as follows. Part of the dynactin complex that activates the molecular motor dynein for ultra-processive transport along microtubules. This chain is Actin-related protein 10 (Actr10), found in Mus musculus (Mouse).